The primary structure comprises 292 residues: Tissue factor (292 aa).

The N-terminal stretch at 1–35 (MATPNGPRVPCPQAAVARALLFGLVLIQGAGVAGT) is a signal peptide. Residues 36 to 248 (TDVVVAYNIT…TSHEKVLSTE (213 aa)) lie on the Extracellular side of the membrane. N-linked (GlcNAc...) asparagine glycosylation is present at Asn43. A WKS motif motif is present at residues 46-48 (WKS). Cys81 and Cys89 are joined by a disulfide. Residues Asn153 and Asn181 are each glycosylated (N-linked (GlcNAc...) asparagine). A disulfide bond links Cys215 and Cys238. A helical membrane pass occupies residues 249–271 (LFFIIGTVMLVIIIFIVVLSVSL). Topologically, residues 272 to 292 (HKCRKVRAERSGKENTPLNAA) are cytoplasmic. Cys274 carries the S-palmitoyl cysteine lipid modification.

The protein belongs to the tissue factor family. As to quaternary structure, interacts with HSPE; the interaction, inhibited by heparin, promotes the generation of activated factor X and activates coagulation in the presence of activated factor VII.

The protein resides in the membrane. Functionally, initiates blood coagulation by forming a complex with circulating factor VII or VIIa. The [TF:VIIa] complex activates factors IX or X by specific limited proteolysis. TF plays a role in normal hemostasis by initiating the cell-surface assembly and propagation of the coagulation protease cascade. This is Tissue factor (F3) from Bos taurus (Bovine).